We begin with the raw amino-acid sequence, 370 residues long: tRNA-specific 2-thiouridylase MnmA (370 aa).

ATP contacts are provided by residues 7–14 and Met34; that span reads ALSGGVDS. The interaction with target base in tRNA stretch occupies residues 104 to 106; the sequence is NPD. Cys109 functions as the Nucleophile in the catalytic mechanism. Cys109 and Cys202 are oxidised to a cystine. Gly134 serves as a coordination point for ATP. The interaction with tRNA stretch occupies residues 152 to 154; that stretch reads KDQ. Residue Cys202 is the Cysteine persulfide intermediate of the active site. Residues 308–309 form an interaction with tRNA region; it reads RY.

It belongs to the MnmA/TRMU family.

The protein localises to the cytoplasm. It carries out the reaction S-sulfanyl-L-cysteinyl-[protein] + uridine(34) in tRNA + AH2 + ATP = 2-thiouridine(34) in tRNA + L-cysteinyl-[protein] + A + AMP + diphosphate + H(+). Functionally, catalyzes the 2-thiolation of uridine at the wobble position (U34) of tRNA, leading to the formation of s(2)U34. The protein is tRNA-specific 2-thiouridylase MnmA of Mycoplasma mobile (strain ATCC 43663 / 163K / NCTC 11711) (Mesomycoplasma mobile).